The sequence spans 417 residues: MLKREMNIADYDADLWRAMEQEVVRQEEHIELIASENYTSPRVMQAQGSQLTNKYAEGYPGKRYYGGCEYVDIVEQLAIDRAKELFGADYANVQPHSGSQANVAVYSALLQPGDTVLGMNLAHGGHLTHGSPVNFSGKLYNIVPYGIDESGKIDYEDMASQAERYKPKMIIGGFSAYSGIVDWAKMREIADSIGAYFFVDMAHVAGLVAAGVYPNPVPHAHVVTTTTHKTLAGPRGGLILARGGDEELYKKLNSSVFPANQGGPLMHVIAGKAVALKEAMEPEFKVYQQQVAKNAKAMVAVFLERGYKVVSGGTDNHLFLLDLVDKNITGKDADAALGRANITVNKNSVPNDPKSPFVTSGVRIGSPAITRRGFKEEESRELAGWMCDVLDNITDEATIERIKQKVLAICARFPVYA.

(6S)-5,6,7,8-tetrahydrofolate-binding positions include Leu121 and 125–127 (GHL). N6-(pyridoxal phosphate)lysine is present on Lys229. 355 to 357 (SPF) contributes to the (6S)-5,6,7,8-tetrahydrofolate binding site.

It belongs to the SHMT family. In terms of assembly, homodimer. Pyridoxal 5'-phosphate is required as a cofactor.

It localises to the cytoplasm. The enzyme catalyses (6R)-5,10-methylene-5,6,7,8-tetrahydrofolate + glycine + H2O = (6S)-5,6,7,8-tetrahydrofolate + L-serine. The protein operates within one-carbon metabolism; tetrahydrofolate interconversion. Its pathway is amino-acid biosynthesis; glycine biosynthesis; glycine from L-serine: step 1/1. Its function is as follows. Catalyzes the reversible interconversion of serine and glycine with tetrahydrofolate (THF) serving as the one-carbon carrier. This reaction serves as the major source of one-carbon groups required for the biosynthesis of purines, thymidylate, methionine, and other important biomolecules. Also exhibits THF-independent aldolase activity toward beta-hydroxyamino acids, producing glycine and aldehydes, via a retro-aldol mechanism. The chain is Serine hydroxymethyltransferase from Yersinia enterocolitica serotype O:8 / biotype 1B (strain NCTC 13174 / 8081).